The primary structure comprises 335 residues: Antigen-presenting glycoprotein CD1d (335 aa).

Positions 1-19 (MGCLLFLLLWALLQAWGSA) are cleaved as a signal peptide. At 20 to 301 (EVPQRLFPLR…ILYWGGSYTS (282 aa)) the chain is on the extracellular side. N-linked (GlcNAc...) asparagine glycans are attached at residues Asn-38 and Asn-60. Asp-98 is a binding site for a D-galactosylceramide. An N-linked (GlcNAc...) asparagine glycan is attached at Asn-126. A D-galactosylceramide contacts are provided by residues Asp-169, 169–172 (DKWT), and Thr-172. N-linked (GlcNAc...) asparagine glycosylation occurs at Asn-181. Residues 185–292 (PQFVSGLLES…HSSLEGQDII (108 aa)) form the Ig-like domain. A helical transmembrane segment spans residues 302–322 (VGLIVLAVLACLLFLLIVGFT). Residues 323-335 (SRFKRQTSYQGVL) are Cytoplasmic-facing. An Internalization signal motif is present at residues 331 to 334 (YQGV).

Heterodimer with B2M (beta-2-microglobulin). Interacts with MHC II.

The protein localises to the cell membrane. It localises to the basolateral cell membrane. The protein resides in the endosome membrane. It is found in the lysosome membrane. Its subcellular location is the endoplasmic reticulum membrane. In terms of biological role, antigen-presenting protein that binds self and non-self glycolipids and presents them to T-cell receptors on natural killer T-cells. This chain is Antigen-presenting glycoprotein CD1d (CD1D), found in Pan troglodytes (Chimpanzee).